An 83-amino-acid polypeptide reads, in one-letter code: Mu-theraphotoxin-Hhn2b 1 (83 aa).

The first 21 residues, M1–A21, serve as a signal peptide directing secretion. Residues S22–R48 constitute a propeptide that is removed on maturation. 3 disulfide bridges follow: C50-C65, C57-C70, and C64-C77. L81 is subject to Leucine amide.

The protein belongs to the neurotoxin 10 (Hwtx-1) family. 14 (Hntx-1) subfamily. Monomer. Expressed by the venom gland.

Its subcellular location is the secreted. In terms of biological role, weakly blocks the rat SCN2A/SCN1B (Nav1.2/beta-1) sodium channel (IC(50)=68 uM) and the insect sodium channel para/tipE (IC(50)=4.3 uM), without altering the activation or inactivation kinetics (depressant toxin). The chain is Mu-theraphotoxin-Hhn2b 1 from Cyriopagopus hainanus (Chinese bird spider).